Here is a 445-residue protein sequence, read N- to C-terminus: NAD-specific glutamate dehydrogenase (445 aa).

Lysine 124 is a catalytic residue. 235–241 (GFGNVAW) lines the NAD(+) pocket.

This sequence belongs to the Glu/Leu/Phe/Val dehydrogenases family. As to quaternary structure, homohexamer.

The enzyme catalyses L-glutamate + NAD(+) + H2O = 2-oxoglutarate + NH4(+) + NADH + H(+). This is NAD-specific glutamate dehydrogenase (gdhB) from Bacteroides fragilis (strain YCH46).